The following is a 381-amino-acid chain: Flap endonuclease 1 (381 aa).

The segment at 1–105 is N-domain; the sequence is MGIKGLNSII…HELDKRTSRR (105 aa). Asp-34 is a Mg(2+) binding site. DNA is bound by residues Arg-47 and Arg-71. Mg(2+) is bound by residues Asp-87, Glu-156, Glu-158, Asp-177, and Asp-179. The I-domain stretch occupies residues 120–251; sequence EKMKHERRLV…VTALKLMKEH (132 aa). Glu-156 is a binding site for DNA. Residues Gly-229 and Asp-231 each coordinate DNA. Asp-231 contributes to the Mg(2+) binding site. Residues 338–346 are interaction with PCNA; sequence VQGRLDGFF.

It belongs to the XPG/RAD2 endonuclease family. FEN1 subfamily. In terms of assembly, interacts with PCNA. Three molecules of FEN1 bind to one PCNA trimer with each molecule binding to one PCNA monomer. PCNA stimulates the nuclease activity without altering cleavage specificity. Mg(2+) is required as a cofactor. In terms of processing, phosphorylated. Phosphorylation upon DNA damage induces relocalization to the nuclear plasma.

It localises to the nucleus. The protein resides in the nucleolus. The protein localises to the nucleoplasm. Its subcellular location is the mitochondrion. Functionally, structure-specific nuclease with 5'-flap endonuclease and 5'-3' exonuclease activities involved in DNA replication and repair. During DNA replication, cleaves the 5'-overhanging flap structure that is generated by displacement synthesis when DNA polymerase encounters the 5'-end of a downstream Okazaki fragment. It enters the flap from the 5'-end and then tracks to cleave the flap base, leaving a nick for ligation. Also involved in the long patch base excision repair (LP-BER) pathway, by cleaving within the apurinic/apyrimidinic (AP) site-terminated flap. Acts as a genome stabilization factor that prevents flaps from equilibrating into structures that lead to duplications and deletions. Also possesses 5'-3' exonuclease activity on nicked or gapped double-stranded DNA, and exhibits RNase H activity. Also involved in replication and repair of rDNA and in repairing mitochondrial DNA. This Candida glabrata (strain ATCC 2001 / BCRC 20586 / JCM 3761 / NBRC 0622 / NRRL Y-65 / CBS 138) (Yeast) protein is Flap endonuclease 1.